The primary structure comprises 490 residues: Tandem C2 domains nuclear protein (490 aa).

5 positions are modified to phosphoserine: S83, S156, S168, S174, and S211. Positions 189-215 (HDSLSSVPSSSSSRKNSQGSNRSLDTI) are disordered. Low complexity predominate over residues 192-211 (LSSVPSSSSSRKNSQGSNRS). T214 and T216 each carry phosphothreonine. S218 is subject to Phosphoserine. 2 consecutive C2 domains span residues 223-342 (DFGR…SLDI) and 344-471 (PPSK…NQWK). A Nuclear localization signal motif is present at residues 447–449 (RRK).

It localises to the nucleus. In Homo sapiens (Human), this protein is Tandem C2 domains nuclear protein (TC2N).